We begin with the raw amino-acid sequence, 246 residues long: Probable transcriptional regulatory protein NT01CX_1819 (246 aa).

Belongs to the TACO1 family.

It localises to the cytoplasm. In Clostridium novyi (strain NT), this protein is Probable transcriptional regulatory protein NT01CX_1819.